A 552-amino-acid polypeptide reads, in one-letter code: uncharacterized protein (552 aa).

This is an uncharacterized protein from Methanocaldococcus jannaschii (strain ATCC 43067 / DSM 2661 / JAL-1 / JCM 10045 / NBRC 100440) (Methanococcus jannaschii).